A 683-amino-acid polypeptide reads, in one-letter code: DNA ligase (683 aa).

NAD(+) is bound by residues 35-39 (DTEYD), 84-85 (SL), and E116. Residue K118 is the N6-AMP-lysine intermediate of the active site. Residues R139, E176, K293, and K317 each contribute to the NAD(+) site. Residues C419, C422, C437, and C443 each coordinate Zn(2+). Positions 602–683 (AGPQLLAGKT…LMKLLAKGVE (82 aa)) constitute a BRCT domain.

The protein belongs to the NAD-dependent DNA ligase family. LigA subfamily. Requires Mg(2+) as cofactor. Mn(2+) serves as cofactor.

It carries out the reaction NAD(+) + (deoxyribonucleotide)n-3'-hydroxyl + 5'-phospho-(deoxyribonucleotide)m = (deoxyribonucleotide)n+m + AMP + beta-nicotinamide D-nucleotide.. DNA ligase that catalyzes the formation of phosphodiester linkages between 5'-phosphoryl and 3'-hydroxyl groups in double-stranded DNA using NAD as a coenzyme and as the energy source for the reaction. It is essential for DNA replication and repair of damaged DNA. The chain is DNA ligase from Dechloromonas aromatica (strain RCB).